Reading from the N-terminus, the 574-residue chain is Type II methyltransferase M.PaeR7I (574 aa).

This sequence belongs to the N(4)/N(6)-methyltransferase family. As to quaternary structure, monomer.

The enzyme catalyses a 2'-deoxyadenosine in DNA + S-adenosyl-L-methionine = an N(6)-methyl-2'-deoxyadenosine in DNA + S-adenosyl-L-homocysteine + H(+). In terms of biological role, a gamma subtype methylase, recognizes the double-stranded sequence 5'-CTCGAG-3', methylates A-5 on both strands, and protects the DNA from cleavage by the PaeR7I endonuclease. The protein is Type II methyltransferase M.PaeR7I (paeR7IM) of Pseudomonas aeruginosa.